The sequence spans 334 residues: Ornithine carbamoyltransferase, catabolic (334 aa).

Residues 57-60 (STRT), Q84, R108, and 135-138 (HPTQ) each bind carbamoyl phosphate. L-ornithine is bound by residues N168, D232, and 236-237 (SM). Residues 274-275 (CL) and R321 contribute to the carbamoyl phosphate site.

This sequence belongs to the aspartate/ornithine carbamoyltransferase superfamily. OTCase family.

The protein resides in the cytoplasm. The enzyme catalyses carbamoyl phosphate + L-ornithine = L-citrulline + phosphate + H(+). It functions in the pathway amino-acid degradation; L-arginine degradation via ADI pathway; carbamoyl phosphate from L-arginine: step 2/2. Reversibly catalyzes the transfer of the carbamoyl group from carbamoyl phosphate (CP) to the N(epsilon) atom of ornithine (ORN) to produce L-citrulline. The chain is Ornithine carbamoyltransferase, catabolic (arcB) from Avibacterium paragallinarum (Haemophilus gallinarum).